Here is a 173-residue protein sequence, read N- to C-terminus: Translation initiation factor IF-3 (173 aa).

Belongs to the IF-3 family. In terms of assembly, monomer.

It is found in the cytoplasm. IF-3 binds to the 30S ribosomal subunit and shifts the equilibrium between 70S ribosomes and their 50S and 30S subunits in favor of the free subunits, thus enhancing the availability of 30S subunits on which protein synthesis initiation begins. The chain is Translation initiation factor IF-3 from Clostridium tetani (strain Massachusetts / E88).